The chain runs to 301 residues: Dihydroorotate dehydrogenase B (NAD(+)), catalytic subunit (301 aa).

Residues Lys44, 68 to 72 (NAMGL), and Asn122 each bind substrate. An FMN-binding site is contributed by 44-45 (KS). FMN is bound at residue Asn122. Cys125 acts as the Nucleophile in catalysis. The FMN site is built by Lys160 and Ile186. 187–188 (NT) lines the substrate pocket. FMN is bound by residues Gly212, 238–239 (GG), and 260–261 (GS).

The protein belongs to the dihydroorotate dehydrogenase family. Type 1 subfamily. In terms of assembly, heterotetramer of 2 PyrK and 2 PyrD type B subunits. FMN is required as a cofactor.

It localises to the cytoplasm. It carries out the reaction (S)-dihydroorotate + NAD(+) = orotate + NADH + H(+). The protein operates within pyrimidine metabolism; UMP biosynthesis via de novo pathway; orotate from (S)-dihydroorotate (NAD(+) route): step 1/1. Functionally, catalyzes the conversion of dihydroorotate to orotate with NAD(+) as electron acceptor. This chain is Dihydroorotate dehydrogenase B (NAD(+)), catalytic subunit (pyrD), found in Methanocella arvoryzae (strain DSM 22066 / NBRC 105507 / MRE50).